Consider the following 382-residue polypeptide: Palmitoyltransferase ZDHHC16B (382 aa).

Topologically, residues 1–75 (MRSWRWSVSR…IYWLVDNMTR (75 aa)) are cytoplasmic. Residues 76–96 (WFGVVFVCLVMALTSSVVVIV) form a helical membrane-spanning segment. Residues 97-107 (YLCVLPIIFSS) are Lumenal-facing. Residues 108–130 (YPVYWILWHLCYGHWNLLMVVFH) form a helical membrane-spanning segment. The Cytoplasmic portion of the chain corresponds to 131–196 (YYKATTTQPG…NNCVGHFNHR (66 aa)). The DHHC domain maps to 153 to 203 (TICKKCIVPKPARTHHCSICNRCILKMDHHCPWLNNCVGHFNHRYFFSFCL). Catalysis depends on C183, which acts as the S-palmitoyl cysteine intermediate. Residues 197-217 (YFFSFCLFMTMGCVYCSISAK) traverse the membrane as a helical segment. Topologically, residues 218–275 (DMFLDAYNAIESGRYKGGASQGEAVPGAGLIYISFQHQSSYQTPPPAFTHQERMVHKS) are lumenal. Residues 276-296 (LVYLWVLTSSVAVALGALTLW) form a helical membrane-spanning segment. Topologically, residues 297 to 382 (HAILITRGET…PAYKSSTTAI (86 aa)) are cytoplasmic.

It belongs to the DHHC palmitoyltransferase family.

It is found in the endoplasmic reticulum membrane. It carries out the reaction L-cysteinyl-[protein] + hexadecanoyl-CoA = S-hexadecanoyl-L-cysteinyl-[protein] + CoA. In terms of biological role, palmitoyl acyltransferase that mediates palmitoylation of proteins and is required during embryonic heart development. Involved in the proliferation of neural stem cells by regulating the FGF/ERK pathway. This is Palmitoyltransferase ZDHHC16B from Danio rerio (Zebrafish).